A 414-amino-acid chain; its full sequence is Serine hydroxymethyltransferase (414 aa).

(6S)-5,6,7,8-tetrahydrofolate-binding positions include L121 and 125–127 (GHL). N6-(pyridoxal phosphate)lysine is present on K229.

This sequence belongs to the SHMT family. In terms of assembly, homodimer. Pyridoxal 5'-phosphate is required as a cofactor.

The protein resides in the cytoplasm. The catalysed reaction is (6R)-5,10-methylene-5,6,7,8-tetrahydrofolate + glycine + H2O = (6S)-5,6,7,8-tetrahydrofolate + L-serine. It functions in the pathway one-carbon metabolism; tetrahydrofolate interconversion. Its pathway is amino-acid biosynthesis; glycine biosynthesis; glycine from L-serine: step 1/1. Functionally, catalyzes the reversible interconversion of serine and glycine with tetrahydrofolate (THF) serving as the one-carbon carrier. This reaction serves as the major source of one-carbon groups required for the biosynthesis of purines, thymidylate, methionine, and other important biomolecules. Also exhibits THF-independent aldolase activity toward beta-hydroxyamino acids, producing glycine and aldehydes, via a retro-aldol mechanism. The polypeptide is Serine hydroxymethyltransferase (Variovorax paradoxus (strain S110)).